We begin with the raw amino-acid sequence, 421 residues long: Solute carrier family 35 member F3 (421 aa).

A disordered region spans residues 25 to 45 (EGEERPRDSPGPAEAQAPAGV). 10 helical membrane-spanning segments follow: residues 66–86 (IFWG…STQL), 98–118 (FTLT…YYVG), 149–169 (VFFT…YLYL), 179–199 (DVSV…WIVL), 208–228 (IVAA…DGFH), 232–252 (VIGI…KVLF), 266–286 (LFLS…PIIL), 305–325 (LCGF…GIAV), 326–346 (TYPT…AVID), and 352–372 (IVFN…FLLL). The segment at 393–421 (KKEEPAEGAADLSSGPQSKNRRARPSFAR) is disordered. Over residues 411-421 (KNRRARPSFAR) the composition is skewed to basic residues.

This sequence belongs to the SLC35F solute transporter family. As to expression, expressed at the highest levels in the adult cerebellum.

The protein localises to the membrane. The enzyme catalyses thiamine(in) = thiamine(out). Mediates thiamine transport. In Homo sapiens (Human), this protein is Solute carrier family 35 member F3.